Here is a 560-residue protein sequence, read N- to C-terminus: uncharacterized protein (560 aa).

Transmembrane regions (helical) follow at residues 9–29, 61–81, 136–156, 305–325, and 442–462; these read LVITILLIVLGANWLLSSFLL, ILVPTGFPLTTGLGLSLKYKI, IGIANSIATVEGFTLSLASMM, SLQIWGKLFAVLLHGGSASFI, and VVLELYCPYAIMGPVAHTNFY.

It is found in the membrane. This is an uncharacterized protein from Saccharomyces cerevisiae (strain ATCC 204508 / S288c) (Baker's yeast).